The chain runs to 158 residues: NAD(P)H-quinone oxidoreductase subunit J, chloroplastic (158 aa).

Belongs to the complex I 30 kDa subunit family. As to quaternary structure, NDH is composed of at least 16 different subunits, 5 of which are encoded in the nucleus.

It is found in the plastid. It localises to the chloroplast thylakoid membrane. The catalysed reaction is a plastoquinone + NADH + (n+1) H(+)(in) = a plastoquinol + NAD(+) + n H(+)(out). The enzyme catalyses a plastoquinone + NADPH + (n+1) H(+)(in) = a plastoquinol + NADP(+) + n H(+)(out). Functionally, NDH shuttles electrons from NAD(P)H:plastoquinone, via FMN and iron-sulfur (Fe-S) centers, to quinones in the photosynthetic chain and possibly in a chloroplast respiratory chain. The immediate electron acceptor for the enzyme in this species is believed to be plastoquinone. Couples the redox reaction to proton translocation, and thus conserves the redox energy in a proton gradient. This chain is NAD(P)H-quinone oxidoreductase subunit J, chloroplastic, found in Nymphaea alba (White water-lily).